Reading from the N-terminus, the 164-residue chain is MNIKELKDKITDYANIVGEQEGVEIVNVEIYPGGKGLTLRIFIDKEGGVTIKDCENFSRAIEAILDVEDPIKSSYTLEVSSPGIDRPLKNKKDFLRNIGRDVKITTKEKIADNTFFIGKIVDVGDDWVRIEIQETKIKGSKKKGKTELLFIPFNKIIKAQVYLG.

The protein belongs to the RimP family.

Its subcellular location is the cytoplasm. Required for maturation of 30S ribosomal subunits. This chain is Ribosome maturation factor RimP, found in Thermodesulfovibrio yellowstonii (strain ATCC 51303 / DSM 11347 / YP87).